Consider the following 144-residue polypeptide: Universal stress protein F (144 aa).

It belongs to the universal stress protein A family. Homodimer.

This Escherichia coli O157:H7 protein is Universal stress protein F (uspF).